Here is a 232-residue protein sequence, read N- to C-terminus: Enolase-phosphatase E1 (232 aa).

Belongs to the HAD-like hydrolase superfamily. MasA/MtnC family. In terms of assembly, monomer. Mg(2+) is required as a cofactor.

It carries out the reaction 5-methylsulfanyl-2,3-dioxopentyl phosphate + H2O = 1,2-dihydroxy-5-(methylsulfanyl)pent-1-en-3-one + phosphate. It participates in amino-acid biosynthesis; L-methionine biosynthesis via salvage pathway; L-methionine from S-methyl-5-thio-alpha-D-ribose 1-phosphate: step 3/6. It functions in the pathway amino-acid biosynthesis; L-methionine biosynthesis via salvage pathway; L-methionine from S-methyl-5-thio-alpha-D-ribose 1-phosphate: step 4/6. Functionally, bifunctional enzyme that catalyzes the enolization of 2,3-diketo-5-methylthiopentyl-1-phosphate (DK-MTP-1-P) into the intermediate 2-hydroxy-3-keto-5-methylthiopentenyl-1-phosphate (HK-MTPenyl-1-P), which is then dephosphorylated to form the acireductone 1,2-dihydroxy-3-keto-5-methylthiopentene (DHK-MTPene). In Xanthomonas axonopodis pv. citri (strain 306), this protein is Enolase-phosphatase E1.